We begin with the raw amino-acid sequence, 420 residues long: Maturation protein A2 (420 aa).

RNA-binding regions lie at residues 158 to 176, 226 to 236, and 294 to 298; these read IKYLGLLLRRLREGYRAVK, QNRHDKIQRLL, and PVSDW.

Belongs to the Leviviricetes maturation protein family. In terms of assembly, interacts with host MurA; this interaction inhibits the first step in host cell wall synthesis. Interacts with the capsid protein.

It localises to the virion. Functionally, induces host cell lysis. Inhibits host MurA activity thereby blocking the synthesis of murein precursors necessary for the host cell wall biosynthesis. May be responsible for the attachment to the host pilus. Makes extensive contacts with the viral genome. In Escherichia virus Qbeta (Bacteriophage Q-beta), this protein is Maturation protein A2.